Consider the following 101-residue polypeptide: Urease subunit beta (101 aa).

The protein belongs to the urease beta subunit family. Heterotrimer of UreA (gamma), UreB (beta) and UreC (alpha) subunits. Three heterotrimers associate to form the active enzyme.

Its subcellular location is the cytoplasm. The enzyme catalyses urea + 2 H2O + H(+) = hydrogencarbonate + 2 NH4(+). It participates in nitrogen metabolism; urea degradation; CO(2) and NH(3) from urea (urease route): step 1/1. The polypeptide is Urease subunit beta (Dinoroseobacter shibae (strain DSM 16493 / NCIMB 14021 / DFL 12)).